The chain runs to 345 residues: Dihydroorotase (345 aa).

2 residues coordinate Zn(2+): histidine 13 and histidine 15. Substrate contacts are provided by residues 15 to 17 (HFR) and asparagine 41. 3 residues coordinate Zn(2+): lysine 98, histidine 135, and histidine 173. Position 98 is an N6-carboxylysine (lysine 98). Histidine 135 lines the substrate pocket. Substrate is bound at residue leucine 218. Aspartate 246 provides a ligand contact to Zn(2+). Aspartate 246 is a catalytic residue. Residues histidine 250 and alanine 262 each coordinate substrate.

Belongs to the metallo-dependent hydrolases superfamily. DHOase family. Class II DHOase subfamily. In terms of assembly, homodimer. The cofactor is Zn(2+).

It catalyses the reaction (S)-dihydroorotate + H2O = N-carbamoyl-L-aspartate + H(+). Its pathway is pyrimidine metabolism; UMP biosynthesis via de novo pathway; (S)-dihydroorotate from bicarbonate: step 3/3. In terms of biological role, catalyzes the reversible cyclization of carbamoyl aspartate to dihydroorotate. This chain is Dihydroorotase, found in Shewanella piezotolerans (strain WP3 / JCM 13877).